Consider the following 116-residue polypeptide: Protein Wnt-5b (116 aa).

Ser1 is lipidated: O-palmitoleoyl serine; by PORCN. Asn69 and Asn83 each carry an N-linked (GlcNAc...) asparagine glycan. Residues Cys82 and Cys97 are joined by a disulfide bond.

It belongs to the Wnt family. Post-translationally, palmitoleoylation is required for efficient binding to frizzled receptors. Depalmitoleoylation leads to Wnt signaling pathway inhibition.

Its subcellular location is the secreted. The protein resides in the extracellular space. It is found in the extracellular matrix. Functionally, ligand for members of the frizzled family of seven transmembrane receptors. Probable developmental protein. May be a signaling molecule which affects the development of discrete regions of tissues. Is likely to signal over only few cell diameters. This Plestiodon skiltonianus (Western skink) protein is Protein Wnt-5b (WNT-5B).